The primary structure comprises 549 residues: Membrane protein insertase YidC (549 aa).

Residues 9 to 29 traverse the membrane as a helical segment; it reads LRLILAIALSFLFIALYSYFF. Positions 37–51 are enriched in low complexity; it reads TETTKQETTNNHTAT. Positions 37–56 are disordered; the sequence is TETTKQETTNNHTATSPTAS. A run of 5 helical transmembrane segments spans residues 328–348, 351–371, 417–437, 452–472, and 498–518; these read VIEYGLITFFAKGVFVLLDYL, FVGNWGWAIILLTIIVRIILY, GANPLGGCLPLILQIPVFFAI, WVLWIHDLSIMDPYFILPLLM, and LLPLLFTIFLITFPAGLVLYW.

The protein belongs to the OXA1/ALB3/YidC family. Type 1 subfamily. Interacts with the Sec translocase complex via SecD. Specifically interacts with transmembrane segments of nascent integral membrane proteins during membrane integration.

It is found in the cell inner membrane. In terms of biological role, required for the insertion and/or proper folding and/or complex formation of integral membrane proteins into the membrane. Involved in integration of membrane proteins that insert both dependently and independently of the Sec translocase complex, as well as at least some lipoproteins. Aids folding of multispanning membrane proteins. The polypeptide is Membrane protein insertase YidC (Helicobacter pylori (strain J99 / ATCC 700824) (Campylobacter pylori J99)).